The chain runs to 362 residues: 3-dehydroquinate synthase (362 aa).

NAD(+)-binding positions include 70-75 (DGEKYK), 104-108 (GVIGD), 128-129 (TT), K141, K150, and 168-171 (TLNT). Positions 183, 246, and 263 each coordinate Zn(2+).

This sequence belongs to the sugar phosphate cyclases superfamily. Dehydroquinate synthase family. Requires Co(2+) as cofactor. Zn(2+) is required as a cofactor. NAD(+) serves as cofactor.

The protein resides in the cytoplasm. It catalyses the reaction 7-phospho-2-dehydro-3-deoxy-D-arabino-heptonate = 3-dehydroquinate + phosphate. It functions in the pathway metabolic intermediate biosynthesis; chorismate biosynthesis; chorismate from D-erythrose 4-phosphate and phosphoenolpyruvate: step 2/7. Functionally, catalyzes the conversion of 3-deoxy-D-arabino-heptulosonate 7-phosphate (DAHP) to dehydroquinate (DHQ). This chain is 3-dehydroquinate synthase, found in Haemophilus influenzae (strain 86-028NP).